Consider the following 329-residue polypeptide: Ubiquitin carboxyl-terminal hydrolase isozyme L5 (329 aa).

Residues 7-225 (EWCLMESDPG…IRFNLMAIVS (219 aa)) enclose the UCH catalytic domain. An N6-succinyllysine modification is found at lysine 47. Catalysis depends on cysteine 88, which acts as the Nucleophile. Lysine 158 carries the post-translational modification N6-acetyllysine. Histidine 164 acts as the Proton donor in catalysis. Lysine 289 carries the N6-succinyllysine modification. The 29-residue stretch at 291–319 (NYLPFIMELLKTLAEHQQLIPLVEKAKEK) folds into the ULD domain. The interaction with ADRM1 stretch occupies residues 313 to 329 (VEKAKEKQNAKKAQETK).

It belongs to the peptidase C12 family. In terms of assembly, component of the 19S (PA700) regulatory complex of the 26S proteasome. Interacts with ADRM1 and NFRKB; in vitro ADRM1 and NFRKB compete for interaction with UCHL5. Component of the INO80 complex; specifically part of a complex module associated with N-terminus of INO80.

The protein resides in the cytoplasm. Its subcellular location is the nucleus. It carries out the reaction Thiol-dependent hydrolysis of ester, thioester, amide, peptide and isopeptide bonds formed by the C-terminal Gly of ubiquitin (a 76-residue protein attached to proteins as an intracellular targeting signal).. Activated by ADRM1. Inhibited by interaction with NFRKB. Functionally, protease that specifically cleaves 'Lys-48'-linked polyubiquitin chains. Deubiquitinating enzyme associated with the 19S regulatory subunit of the 26S proteasome. Putative regulatory component of the INO80 complex; however is inactive in the INO80 complex and is activated by a transient interaction of the INO80 complex with the proteasome via ADRM1. In Homo sapiens (Human), this protein is Ubiquitin carboxyl-terminal hydrolase isozyme L5 (UCHL5).